We begin with the raw amino-acid sequence, 54 residues long: UPF0391 membrane protein Sde_0270 (54 aa).

The next 2 helical transmembrane spans lie at 6 to 26 and 29 to 49; these read IVFLLIALVAGLFGFVGIAGV and GIAKILFFVFLIAFVVSLVIG.

This sequence belongs to the UPF0391 family.

The protein resides in the cell membrane. This chain is UPF0391 membrane protein Sde_0270, found in Saccharophagus degradans (strain 2-40 / ATCC 43961 / DSM 17024).